Here is a 393-residue protein sequence, read N- to C-terminus: Cysteine protease ATG4B (393 aa).

An N-acetylmethionine modification is found at methionine 1. Serine 34 is subject to Phosphoserine. Cysteine 74 acts as the Nucleophile in catalysis. Position 189 is an S-nitrosocysteine (cysteine 189). Catalysis depends on residues aspartate 278 and histidine 280. S-nitrosocysteine occurs at positions 292 and 301. A disulfide bond links cysteine 292 and cysteine 361. Phosphoserine is present on residues serine 316 and serine 383. Positions 388–391 match the LIR motif; the sequence is FEIL. Serine 392 carries the post-translational modification Phosphoserine.

This sequence belongs to the peptidase C54 family. As to quaternary structure, interacts with PFKP; promoting phosphorylation of ATG4B at Ser-34. Interacts with GBP7. Post-translationally, phosphorylation at Ser-383 and Ser-392 promotes autophagy by increasing protein delipidation activity without affecting proteolytic activation of ATG8 proteins. Phosphorylation at Ser-316 by ULK1 inhibits autophagy by decreasing both proteolytic activation and delipidation activities. Phosphorylation at Ser-316 is dephosphorylated by protein phosphatase 2A (PP2A). Phosphorylation at Ser-34 by AKT2 promotes its hydrolase activity, leading to increased proteolytic activation and delipidation of ATG8 family proteins. Phosphorylation at Ser-34 by AKT1 promotes mitochondrial localization and inhibition of the F1F0-ATP synthase activity, leading to elevation of mitochondrial reactive oxygen species (ROS). Ubiquitinated by RNF5, leading to its degradation by the proteasome. In terms of processing, S-nitrosylation at Cys-189 and Cys-292 in response to high glucose decreases both proteolytic activation and delipidation activities. Post-translationally, O-glycosylated by OGT, leading to increase protease activity, thereby promoting the proteolytic activation of ATG8 family proteins. Forms reversible intrachain disulfide bonds in response to oxidative stress. Forms interchain disulfide bonds, leading to formation of homooligomers in response to oxidation.

The protein localises to the cytoplasm. It localises to the cytosol. Its subcellular location is the cytoplasmic vesicle. The protein resides in the autophagosome. It is found in the endoplasmic reticulum. The protein localises to the mitochondrion. It carries out the reaction [protein]-C-terminal L-amino acid-glycyl-phosphatidylethanolamide + H2O = [protein]-C-terminal L-amino acid-glycine + a 1,2-diacyl-sn-glycero-3-phosphoethanolamine. The catalysed reaction is [protein]-C-terminal L-amino acid-glycyl-phosphatidylserine + H2O = [protein]-C-terminal L-amino acid-glycine + a 1,2-diacyl-sn-glycero-3-phospho-L-serine. Inhibited by N-ethylmaleimide. Redox-regulated during autophagy since reducing conditions activate ATG4A whereas an oxidizing environment such as the presence of H(2)O(2) inhibits its activity. The cysteine protease activity compounds is inhibited by styrylquinoline compounds 4-28 and LV-320. Functionally, cysteine protease that plays a key role in autophagy by mediating both proteolytic activation and delipidation of ATG8 family proteins. Required for canonical autophagy (macroautophagy), non-canonical autophagy as well as for mitophagy. The protease activity is required for proteolytic activation of ATG8 family proteins: cleaves the C-terminal amino acid of ATG8 proteins MAP1LC3A, MAP1LC3B, MAP1LC3C, GABARAPL1, GABARAPL2 and GABARAP, to reveal a C-terminal glycine. Exposure of the glycine at the C-terminus is essential for ATG8 proteins conjugation to phosphatidylethanolamine (PE) and insertion to membranes, which is necessary for autophagy. Protease activity is also required to counteract formation of high-molecular weight conjugates of ATG8 proteins (ATG8ylation): acts as a deubiquitinating-like enzyme that removes ATG8 conjugated to other proteins, such as ATG3. In addition to the protease activity, also mediates delipidation of ATG8 family proteins. Catalyzes delipidation of PE-conjugated forms of ATG8 proteins during macroautophagy. Also involved in non-canonical autophagy, a parallel pathway involving conjugation of ATG8 proteins to single membranes at endolysosomal compartments, by catalyzing delipidation of ATG8 proteins conjugated to phosphatidylserine (PS). Compared to other members of the family (ATG4A, ATG4C or ATG4C), constitutes the major protein for proteolytic activation of ATG8 proteins, while it displays weaker delipidation activity than other ATG4 paralogs. Involved in phagophore growth during mitophagy independently of its protease activity and of ATG8 proteins: acts by regulating ATG9A trafficking to mitochondria and promoting phagophore-endoplasmic reticulum contacts during the lipid transfer phase of mitophagy. This Mus musculus (Mouse) protein is Cysteine protease ATG4B.